The following is an 854-amino-acid chain: Arsenate respiratory reductase molybdopterin-containing subunit ArrA (854 aa).

A signal peptide (tat-type signal) is located at residues 1–41 (MKKENQVNLGRRQLLKSTAAGTVLTGIGGTLSFTPIVEGIA). The 57-residue stretch at 54-110 (GEWLATTCQGCTSWCAKQIYVMDGRALKVRGNPNSGVHGMSSCPRQHLSLQQVYDPD) folds into the 4Fe-4S Mo/W bis-MGD-type domain. Residues cysteine 61, cysteine 64, cysteine 68, and cysteine 96 each coordinate [4Fe-4S] cluster. Arginine 165 lines the arsenite pocket. Tyrosine 166 serves as a coordination point for arsenate. Histidine 189 contributes to the arsenite binding site. An arsenate-binding site is contributed by serine 190. Residue cysteine 193 coordinates Mo-bis(molybdopterin guanine dinucleotide). Residue lysine 198 participates in arsenate binding. Tyrosine 210 serves as a coordination point for arsenite.

The protein belongs to the prokaryotic molybdopterin-containing oxidoreductase family. As to quaternary structure, heterodimer composed of one large subunit (ArrA) and one small subunit (ArrB). Requires [4Fe-4S] cluster as cofactor. Mo-bis(molybdopterin guanine dinucleotide) serves as cofactor. Predicted to be exported by the Tat system. The position of the signal peptide cleavage has not been experimentally proven.

The protein localises to the periplasm. The catalysed reaction is arsenite + A + H2O = arsenate + AH2 + H(+). With respect to regulation, phosphate is a competitive inhibitor. Functionally, component of the arsenate respiratory reductase (Arr) complex, which catalyzes the reduction of arsenate (As(V)) to arsenite (As(III)). ArrA is the arsenate-binding subunit. The periplasmic localization of this complex may allow the cell to couple arsenate reduction to energy production before arsenate can be transported to the cell cytoplasm and enter the ars detoxification pathway, an energy-requiring process. The polypeptide is Arsenate respiratory reductase molybdopterin-containing subunit ArrA (Shewanella sp. (strain ANA-3)).